Consider the following 893-residue polypeptide: Desmocollin-1 (893 aa).

The N-terminal stretch at 1–29 is a signal peptide; the sequence is MAVASAAPGSIFWKQLLFSLLVLILFCDA. The propeptide occupies 30 to 132; that stretch reads CQKISLQVPS…KDAVLRRTKR (103 aa). Cadherin domains are found at residues 133–240, 241–352, 353–470, 471–574, and 575–682; these read RWAP…APYF, ENKL…APYF, TETS…GPEC, QPPV…DHPP, and QIKQ…LSRE. Residues 133-692 are Extracellular-facing; that stretch reads RWAPIPCSLM…AALANVFLGK (560 aa). Asparagine 163 is a glycosylation site (N-linked (GlcNAc...) asparagine). A Phosphothreonine modification is found at threonine 383. Residues asparagine 398 and asparagine 545 are each glycosylated (N-linked (GlcNAc...) asparagine). Residues 693 to 715 traverse the membrane as a helical segment; it reads WAILAMVLGSVLLLCILFTCFCV. At 716–893 the chain is on the cytoplasmic side; the sequence is TVKKTVKKCF…RTLAKTCVKK (178 aa).

Binds to JUP/plakoglobin. Isoform 1A is phosphorylated on a serine but isoform 1B is not. As to expression, epidermis and weakly in tongue papillae.

The protein resides in the cell membrane. It is found in the cell junction. The protein localises to the desmosome. Its function is as follows. A component of desmosome cell-cell junctions which are required for positive regulation of cellular adhesion. Required for desmosome adhesion strength between the granular layers of the epidermis, as a result moderates epidermal proliferation and differentiation. Is therefore required to maintain postnatal epidermal barrier function and normal hair follicle morphology into adulthood. This is Desmocollin-1 (DSC1) from Bos taurus (Bovine).